Reading from the N-terminus, the 722-residue chain is MEKNGNNRKLRVCVATCNRADYSKLAPIMFGIKTEPEFFELDVVVLGSHLIDDYGNTYRMIEQDDFDINTRLHTIVRGEDEAAMVESVGLALVKLPDVLNRLKPDIMIVHGDRFDALALATSAALMNIRILHIEGGEVSGTIDDSIRHAITKLAHYHVCCTRSAEQHLISMCEDHDRILLAGCPSYDKLLSAKNKDYMSIIRMWLGDDVKSKDYIVALQHPVTTDIKHSIKMFELTLDALISFNKRTLVLFPNIDAGSKEMVRVMRKKGIEHHPNFRAVKHVPFDQFIQLVAHAGCMIGNSSCGVREVGAFGTPVINLGTRQIGRETGENVLHVRDADTQDKILQALHLQFGKQYPCSKIYGDGNAVPRILKFLKSIDLQEPLQKKFCFPPVKENISQDIDHILETLSALAVDLGGTNLRVAIVSMKGEIVKKYTQFNPKTYEERINLILQMCVEAAAEAVKLNCRILGVGISTGGRVNPREGIVLHSTKLIQEWNSVDLRTPLSDTLHLPVWVDNDGNCAALAERKFGQGKGLENFVTLITGTGIGGGIIHQHELIHGSSFCAAELGHLVVSLDGPDCSCGSHGCIEAYASGMALQREAKKLHDEDLLLVEGMSVPKDEAVGALHLIQAAKLGNAKAQSILRTAGTALGLGVVNILHTMNPSLVILSGVLASHYIHIVKDVIRQQALSSVQDVDVVVSDLVDPALLGAASMVLDYTTRRIY.

UDP contacts are provided by R19, S23, R113, H220, and N253. Residues K259, E271, K280, and H281 each coordinate CMP-N-acetyl-beta-neuraminate. Positions 282, 301, 302, 307, and 321 each coordinate UDP. The interval 406–722 is N-acetylmannosamine kinase; it reads TLSALAVDLG…VLDYTTRRIY (317 aa). D413 lines the Mg(2+) pocket. G416 contributes to the an N-acyl-D-mannosamine 6-phosphate binding site. ADP-binding residues include T417, N418, and R420. Residues G476, R477, T489, N516, D517, and G545 each contribute to the an N-acyl-D-mannosamine 6-phosphate site. An N-acyl-D-mannosamine is bound by residues G476, R477, T489, N516, and D517. D517 is an active-site residue. An N-acyl-D-mannosamine is bound by residues E566 and H569. Residue H569 participates in an N-acyl-D-mannosamine 6-phosphate binding. Zn(2+)-binding residues include H569, C579, C581, and C586. An N-acyl-D-mannosamine 6-phosphate is bound at residue E588. E588 lines the an N-acyl-D-mannosamine pocket.

This sequence in the N-terminal section; belongs to the UDP-N-acetylglucosamine 2-epimerase family. It in the C-terminal section; belongs to the ROK (NagC/XylR) family. In terms of assembly, homodimer. Homotetramer. Homohexamer. The hexameric form exhibits both enzyme activities, whereas the dimeric form only catalyzes the phosphorylation of N-acyl-D-mannosamine. Post-translationally, phosphorylated. Phosphorylation by PKC activates the UDP-N-acetylglucosamine 2-epimerase activity. Highest expression in liver and placenta. Also found in heart, brain, lung, kidney, skeletal muscle and pancreas. Isoform 1 is expressed in heart, brain, kidney, liver, placenta, lung, spleen, pancreas, skeletal muscle and colon. Isoform 2 is expressed mainly in placenta, but also in brain, kidney, liver, lung, pancreas and colon. Isoform 3 is expressed at low level in kidney, liver, placenta and colon.

The protein resides in the cytoplasm. Its subcellular location is the cytosol. It carries out the reaction UDP-N-acetyl-alpha-D-glucosamine + H2O = aldehydo-N-acetyl-D-mannosamine + UDP + H(+). The enzyme catalyses an N-acyl-D-mannosamine + ATP = an N-acyl-D-mannosamine 6-phosphate + ADP + H(+). It participates in amino-sugar metabolism; N-acetylneuraminate biosynthesis. The UDP-N-acetylglucosamine 2-epimerase activity, in contrast to the N-acetylmannosamine kinase activity, exhibits allosteric regulation by cytidine monophosphate-N-acetylneuraminic acid (CMP-Neu5Ac), the end product of neuraminic acid biosynthesis. Moreover, the activity is contingent upon the oligomeric state of the enzyme. The monomeric form is inactive, while the dimeric form selectively catalyzes the phosphorylation of N-acetylmannosamine. The hexameric form, on the other hand, demonstrates full proficiency in both enzyme activities. Furthermore, the UDP-N-acetylglucosamine 2-epimerase activity is increased by PKC-mediated phosphorylation. Functionally, bifunctional enzyme that possesses both UDP-N-acetylglucosamine 2-epimerase and N-acetylmannosamine kinase activities, and serves as the initiator of the biosynthetic pathway leading to the production of N-acetylneuraminic acid (NeuAc), a critical precursor in the synthesis of sialic acids. By catalyzing this pivotal and rate-limiting step in sialic acid biosynthesis, this enzyme assumes a pivotal role in governing the regulation of cell surface sialylation, playing a role in embryonic angiogenesis. Sialic acids represent a category of negatively charged sugars that reside on the surface of cells as terminal components of glycoconjugates and mediate important functions in various cellular processes, including cell adhesion, signal transduction, and cellular recognition. This chain is Bifunctional UDP-N-acetylglucosamine 2-epimerase/N-acetylmannosamine kinase, found in Homo sapiens (Human).